The primary structure comprises 139 residues: Transcription antitermination protein NusB (139 aa).

It belongs to the NusB family.

Its function is as follows. Involved in transcription antitermination. Required for transcription of ribosomal RNA (rRNA) genes. Binds specifically to the boxA antiterminator sequence of the ribosomal RNA (rrn) operons. This Klebsiella pneumoniae (strain 342) protein is Transcription antitermination protein NusB.